A 120-amino-acid polypeptide reads, in one-letter code: Lysozyme (120 aa).

The C-type lysozyme domain maps to 1-120 (KRFTRCGLVN…NHSNPDISSC (120 aa)). 4 cysteine pairs are disulfide-bonded: cysteine 6-cysteine 120, cysteine 27-cysteine 110, cysteine 62-cysteine 76, and cysteine 72-cysteine 90. Active-site residues include glutamate 32 and aspartate 50.

The protein belongs to the glycosyl hydrolase 22 family. As to quaternary structure, monomer.

The enzyme catalyses Hydrolysis of (1-&gt;4)-beta-linkages between N-acetylmuramic acid and N-acetyl-D-glucosamine residues in a peptidoglycan and between N-acetyl-D-glucosamine residues in chitodextrins.. Lysozymes have primarily a bacteriolytic function; those in tissues and body fluids are associated with the monocyte-macrophage system and enhance the activity of immunoagents. In Antheraea mylitta (Tasar silkworm), this protein is Lysozyme.